Consider the following 451-residue polypeptide: tRNA-2-methylthio-N(6)-dimethylallyladenosine synthase (451 aa).

Residues 2–119 enclose the MTTase N-terminal domain; it reads QNLYIKTYGC…LPDLLDACLA (118 aa). Cysteine 11, cysteine 48, cysteine 82, cysteine 157, cysteine 161, and cysteine 164 together coordinate [4Fe-4S] cluster. The Radical SAM core domain occupies 143–377; it reads GRDGATAFVT…RINGLAQGYA (235 aa). Positions 378–441 constitute a TRAM domain; that stretch reads QALVGTQQAV…PNSLRGRAAL (64 aa).

Belongs to the methylthiotransferase family. MiaB subfamily. Monomer. [4Fe-4S] cluster serves as cofactor.

It localises to the cytoplasm. It catalyses the reaction N(6)-dimethylallyladenosine(37) in tRNA + (sulfur carrier)-SH + AH2 + 2 S-adenosyl-L-methionine = 2-methylsulfanyl-N(6)-dimethylallyladenosine(37) in tRNA + (sulfur carrier)-H + 5'-deoxyadenosine + L-methionine + A + S-adenosyl-L-homocysteine + 2 H(+). Functionally, catalyzes the methylthiolation of N6-(dimethylallyl)adenosine (i(6)A), leading to the formation of 2-methylthio-N6-(dimethylallyl)adenosine (ms(2)i(6)A) at position 37 in tRNAs that read codons beginning with uridine. The sequence is that of tRNA-2-methylthio-N(6)-dimethylallyladenosine synthase from Acidithiobacillus ferrooxidans (strain ATCC 23270 / DSM 14882 / CIP 104768 / NCIMB 8455) (Ferrobacillus ferrooxidans (strain ATCC 23270)).